The sequence spans 627 residues: Neutral endopeptidase (627 aa).

The region spanning 1–627 (MTRIQDDLFA…RAPENRLKIW (627 aa)) is the Peptidase M13 domain. His475 is a Zn(2+) binding site. Glu476 is an active-site residue. 2 residues coordinate Zn(2+): His479 and Glu535. Asp539 (proton donor) is an active-site residue.

The protein belongs to the peptidase M13 family. As to quaternary structure, monomer. The cofactor is Zn(2+).

Functionally, endopeptidase with broad substrate specificity for several oligopeptides. The polypeptide is Neutral endopeptidase (pepO) (Lactococcus lactis subsp. lactis (strain IL1403) (Streptococcus lactis)).